A 211-amino-acid polypeptide reads, in one-letter code: Small ribosomal subunit protein uS5 (211 aa).

One can recognise an S5 DRBM domain in the interval 51–114 (LKHEVLDVSL…ANAKLNITPV (64 aa)).

This sequence belongs to the universal ribosomal protein uS5 family. Part of the 30S ribosomal subunit. Contacts protein S4.

With S4 and S12 plays an important role in translational accuracy. The protein is Small ribosomal subunit protein uS5 of Ignicoccus hospitalis (strain KIN4/I / DSM 18386 / JCM 14125).